Consider the following 172-residue polypeptide: 3-phenylpropionate/cinnamic acid dioxygenase subunit beta (172 aa).

The protein belongs to the bacterial ring-hydroxylating dioxygenase beta subunit family. This dioxygenase system consists of four proteins: the two subunits of the hydroxylase component (HcaE and HcaF), a ferredoxin (HcaC) and a ferredoxin reductase (HcaD).

The enzyme catalyses 3-phenylpropanoate + NADH + O2 + H(+) = 3-(cis-5,6-dihydroxycyclohexa-1,3-dien-1-yl)propanoate + NAD(+). The catalysed reaction is (E)-cinnamate + NADH + O2 + H(+) = (2E)-3-(cis-5,6-dihydroxycyclohexa-1,3-dien-1-yl)prop-2-enoate + NAD(+). It participates in aromatic compound metabolism; 3-phenylpropanoate degradation. In terms of biological role, part of the multicomponent 3-phenylpropionate dioxygenase. Converts 3-phenylpropionic acid (PP) and cinnamic acid (CI) into 3-phenylpropionate-dihydrodiol (PP-dihydrodiol) and cinnamic acid-dihydrodiol (CI-dihydrodiol), respectively. In Shigella flexneri serotype 5b (strain 8401), this protein is 3-phenylpropionate/cinnamic acid dioxygenase subunit beta.